The chain runs to 126 residues: Aspartate 1-decarboxylase (126 aa).

The Schiff-base intermediate with substrate; via pyruvic acid role is filled by Ser-25. Position 25 is a pyruvic acid (Ser) (Ser-25). Thr-57 lines the substrate pocket. Tyr-58 serves as the catalytic Proton donor. Position 73–75 (73–75 (GGA)) interacts with substrate.

This sequence belongs to the PanD family. As to quaternary structure, heterooctamer of four alpha and four beta subunits. Requires pyruvate as cofactor. In terms of processing, is synthesized initially as an inactive proenzyme, which is activated by self-cleavage at a specific serine bond to produce a beta-subunit with a hydroxyl group at its C-terminus and an alpha-subunit with a pyruvoyl group at its N-terminus.

It is found in the cytoplasm. It catalyses the reaction L-aspartate + H(+) = beta-alanine + CO2. It functions in the pathway cofactor biosynthesis; (R)-pantothenate biosynthesis; beta-alanine from L-aspartate: step 1/1. Functionally, catalyzes the pyruvoyl-dependent decarboxylation of aspartate to produce beta-alanine. This chain is Aspartate 1-decarboxylase, found in Xylella fastidiosa (strain M12).